We begin with the raw amino-acid sequence, 209 residues long: Uracil phosphoribosyltransferase (209 aa).

5-phospho-alpha-D-ribose 1-diphosphate is bound by residues Arg79, Arg104, and 131–139 (DPMLATGGS). Residues Val194 and 199–201 (GDA) contribute to the uracil site. 5-phospho-alpha-D-ribose 1-diphosphate is bound at residue Asp200.

The protein belongs to the UPRTase family. Mg(2+) serves as cofactor.

It carries out the reaction UMP + diphosphate = 5-phospho-alpha-D-ribose 1-diphosphate + uracil. The protein operates within pyrimidine metabolism; UMP biosynthesis via salvage pathway; UMP from uracil: step 1/1. Allosterically activated by GTP. Functionally, catalyzes the conversion of uracil and 5-phospho-alpha-D-ribose 1-diphosphate (PRPP) to UMP and diphosphate. The chain is Uracil phosphoribosyltransferase from Bacillus cereus (strain Q1).